We begin with the raw amino-acid sequence, 869 residues long: Bifunctional uridylyltransferase/uridylyl-removing enzyme (869 aa).

The tract at residues 1–332 (MTDTPAERPD…QFDGEATPEP (332 aa)) is uridylyltransferase. The tract at residues 333-691 (LGGGFSLRRG…RRAVPDNDAL (359 aa)) is uridylyl-removing. The HD domain occupies 450 to 572 (VDQHTLMVLR…VGTRERLDYL (123 aa)). ACT domains lie at 692 to 774 (EVFV…RAVP) and 798 to 869 (RISL…LDPV).

It belongs to the GlnD family. Mg(2+) is required as a cofactor.

It carries out the reaction [protein-PII]-L-tyrosine + UTP = [protein-PII]-uridylyl-L-tyrosine + diphosphate. The catalysed reaction is [protein-PII]-uridylyl-L-tyrosine + H2O = [protein-PII]-L-tyrosine + UMP + H(+). Its activity is regulated as follows. Uridylyltransferase (UTase) activity is inhibited by glutamine, while glutamine activates uridylyl-removing (UR) activity. Modifies, by uridylylation and deuridylylation, the PII regulatory proteins (GlnB and homologs), in response to the nitrogen status of the cell that GlnD senses through the glutamine level. Under low glutamine levels, catalyzes the conversion of the PII proteins and UTP to PII-UMP and PPi, while under higher glutamine levels, GlnD hydrolyzes PII-UMP to PII and UMP (deuridylylation). Thus, controls uridylylation state and activity of the PII proteins, and plays an important role in the regulation of nitrogen assimilation and metabolism. In Xanthomonas axonopodis pv. citri (strain 306), this protein is Bifunctional uridylyltransferase/uridylyl-removing enzyme.